A 495-amino-acid polypeptide reads, in one-letter code: MEHTEKSQVHAEKGLLGKIKRYLSKRPLPSPTDRKKFDQDFAMSTSFHGIHNIAQNQNKVRKVIWLAVVLGSVSLLVWQIYSRLVNYFTWPTTTSIEVQYVEKIEFPAVTLCNLNRFQTEAVSRFGIIFFLWDIVSKVLRLQEISANNTGSPETLDFVTNHQNFSITEFVKNNGFYLNNDTLVHCEFFGKTCSPKDFKHVFTEYGNCFTFNYGENIQNKNKVSVSGRGLKLLLDVHQEEFTDNPVPGFADAGVIFVIHSPKKEPQFDGLGLSSPVGMHARVTIRQLKTVHQEYPWGECNPNIKLRNFITYSTYGCLKECKARHIQRLCGCLPFLLPGNGVECDLLEYYNCVSPILDHIERKGLCTMGTHNSSCPVSCEETEYPATVSYSTFPSQRATRFLAKKLNQSQEYIRENLVNIEINYSDLNYKITQQQKAVSVPELLADVGGQLGLFCGASLITIIEIIEYFFTNFYWVLIFFLLKILETIQRTSPPQAV.

The binds the plasma membrane and stabilizes the channel in the closed state stretch occupies residues 1–30 (MEHTEKSQVHAEKGLLGKIKRYLSKRPLPS). Residues 1 to 61 (MEHTEKSQVH…NIAQNQNKVR (61 aa)) are Cytoplasmic-facing. The helical transmembrane segment at 62 to 82 (KVIWLAVVLGSVSLLVWQIYS) threads the bilayer. The Extracellular portion of the chain corresponds to 83–459 (RLVNYFTWPT…GLFCGASLIT (377 aa)). Cystine bridges form between Cys-112–Cys-207, Cys-185–Cys-192, Cys-298–Cys-377, Cys-315–Cys-373, Cys-328–Cys-350, and Cys-330–Cys-342. Residues Asn-147, Asn-163, and Asn-179 are each glycosylated (N-linked (GlcNAc...) asparagine). Asn-370, Asn-405, and Asn-421 each carry an N-linked (GlcNAc...) asparagine glycan. Residues 454–456 (GAS) carry the GAS motif; ion selectivity filter motif. Residues 460–480 (IIEIIEYFFTNFYWVLIFFLL) form a helical membrane-spanning segment. The Cytoplasmic portion of the chain corresponds to 481–495 (KILETIQRTSPPQAV).

The protein belongs to the amiloride-sensitive sodium channel (TC 1.A.6) family. ASIC5 subfamily. As to quaternary structure, forms homotrimeric channels. Expressed by cholangiocytes (at protein level). Detected in cerebellum, brainstem, kidney, liver, hepatocytes, lung, intestine and embryo. In the cerebellum, restricted to interneurons in the granular layer, specifically in GRM1-expressing unipolar brush cells of the vestibulocerebellum.

It localises to the apical cell membrane. It is found in the cell membrane. It catalyses the reaction Na(+)(in) = Na(+)(out). The enzyme catalyses Li(+)(in) = Li(+)(out). It carries out the reaction K(+)(in) = K(+)(out). The catalysed reaction is H(+)(in) = H(+)(out). Its activity is regulated as follows. Inhibited by the diuretic drug amiloride. Contrary to its rat ortholog it is not inhibited by Ca(2+). In terms of biological role, forms bile acid-gated sodium channels and may play a role in bile acid-dependent absorption and secretion by epithelial cells of the bile ducts. Displays high selectivity for sodium ions but can also permit the permeation of other cations. The gating could be indirect and the consequence of alterations of the membrane environment of the channel by bile acids. As a sodium channel of type II unipolar brush cells of the vestibulocerebellum, controlling the electrical activity of these cells, could play a role in motor coordination and balance. The chain is Bile acid-sensitive ion channel from Mus musculus (Mouse).